A 79-amino-acid polypeptide reads, in one-letter code: Ketoisovalerate oxidoreductase subunit VorC (79 aa).

2 consecutive 4Fe-4S ferredoxin-type domains span residues 4-33 and 40-70; these read AYPV…MSNK and HYVE…VHIE. Cys-13, Cys-16, Cys-19, Cys-23, Cys-49, Cys-52, Cys-55, and Cys-59 together coordinate [4Fe-4S] cluster.

As to quaternary structure, heterotrimer of the VorA, VorB and VorC subunits. [4Fe-4S] cluster serves as cofactor.

It carries out the reaction 3-methyl-2-oxobutanoate + 2 oxidized [2Fe-2S]-[ferredoxin] + CoA = 2-methylpropanoyl-CoA + 2 reduced [2Fe-2S]-[ferredoxin] + CO2 + H(+). This Methanothermobacter marburgensis (strain ATCC BAA-927 / DSM 2133 / JCM 14651 / NBRC 100331 / OCM 82 / Marburg) (Methanobacterium thermoautotrophicum) protein is Ketoisovalerate oxidoreductase subunit VorC (vorC).